A 417-amino-acid chain; its full sequence is Putative plant UBX domain-containing protein 14 (417 aa).

The UBX domain maps to 335-415 (DRSVVCSICV…GIANSMISVT (81 aa)).

The protein is Putative plant UBX domain-containing protein 14 of Arabidopsis thaliana (Mouse-ear cress).